Reading from the N-terminus, the 459-residue chain is Eukaryotic translation initiation factor 3 subunit M (459 aa).

A PCI domain is found at 207–384 (LDWAQTHVVD…SEFLVHRATY (178 aa)). The tract at residues 431–459 (AAAEGEKGDKNNKGPSERRRAPQEIAAAE) is disordered. A compositionally biased stretch (basic and acidic residues) spans 434–452 (EGEKGDKNNKGPSERRRAP).

The protein belongs to the eIF-3 subunit M family. As to quaternary structure, component of the eukaryotic translation initiation factor 3 (eIF-3) complex.

The protein resides in the cytoplasm. Component of the eukaryotic translation initiation factor 3 (eIF-3) complex, which is involved in protein synthesis of a specialized repertoire of mRNAs and, together with other initiation factors, stimulates binding of mRNA and methionyl-tRNAi to the 40S ribosome. The eIF-3 complex specifically targets and initiates translation of a subset of mRNAs involved in cell proliferation. This Emericella nidulans (strain FGSC A4 / ATCC 38163 / CBS 112.46 / NRRL 194 / M139) (Aspergillus nidulans) protein is Eukaryotic translation initiation factor 3 subunit M.